Here is a 614-residue protein sequence, read N- to C-terminus: Vitamin B12 transporter BtuB (614 aa).

Positions 1-20 are cleaved as a signal peptide; sequence MIKKASLLTACSVTAFSAWA. Positions 26–33 match the TonB box motif; the sequence is DTLVVTAN. Residues 38–152 form the TBDR plug domain; it reads PRSTVLAPTT…IGGVVNIITT (115 aa). Residues Leu83, Ser85, Asn92, and 110–111 contribute to the cyanocob(III)alamin site; that span reads VS. The TBDR beta-barrel domain occupies 155–614; sequence HPGTEISAGW…EYTLSGSYTF (460 aa). Transmembrane regions (beta stranded) follow at residues 158 to 165, 169 to 178, and 184 to 195; these read TEISAGWG, YQNYDVSTQQ, and TRVTLLGDYAHT. Residues Asp199, Gln211, Asp213, and Asp215 each contribute to the Ca(2+) site. The next 2 membrane-spanning stretches (beta stranded) occupy residues 217–227 and 232–248; these read FLSKTLYGALE and DVWSGFVRGYGYDNRTN. Ca(2+)-binding residues include Tyr249 and Asp250. Ala251 provides a ligand contact to cyanocob(III)alamin. Asp261 contributes to the Ca(2+) binding site. The next 14 membrane-spanning stretches (beta stranded) occupy residues 263-277, 279-296, 309-325, 328-337, 353-369, 371-381, 385-400, 403-417, 434-443, 449-458, 473-490, 494-509, 517-529, and 535-550; these read RKLYSQSWDAGLRYN, ELIKSQLITSYSHSKDYN, TLDEMKQYTVQWANNII, HGNIGAGVDW, YDQRNTGIYLTGLQQVG, FTFEGAGRSDD, FGRHGTWQTSAGWEFI, YRFIASYGTSYKAPN, KSKQWEGAFE, VNWRISGYRN, YYNEGKARIKGVEATANF, PLTHTVSYDYVDARNA, RRAKQQVKYQLDW, and DWGITYQYLGTRYDKD. Position 309 (Thr309) interacts with cyanocob(III)alamin. Residue Arg517 coordinates cyanocob(III)alamin. Residue Tyr551 coordinates cyanocob(III)alamin. 3 consecutive transmembrane segments (beta stranded) span residues 558-572, 585-596, and 602-614; these read TVKMGGVSLWDLAVA, IANLFDKDYETV, and AGREYTLSGSYTF. The TonB C-terminal box motif lies at 597–614; sequence YGYQTAGREYTLSGSYTF.

Belongs to the TonB-dependent receptor family. BtuB (TC 1.B.14.3.1) subfamily.

The protein resides in the cell outer membrane. Functionally, involved in the active translocation of vitamin B12 (cyanocobalamin) across the outer membrane to the periplasmic space. It derives its energy for transport by interacting with the trans-periplasmic membrane protein TonB. This is Vitamin B12 transporter BtuB from Escherichia coli O1:K1 / APEC.